A 198-amino-acid chain; its full sequence is Nucleoside triphosphate pyrophosphatase (198 aa).

The active-site Proton acceptor is Asp72.

The protein belongs to the Maf family. Requires a divalent metal cation as cofactor.

Its subcellular location is the cytoplasm. It catalyses the reaction a ribonucleoside 5'-triphosphate + H2O = a ribonucleoside 5'-phosphate + diphosphate + H(+). The catalysed reaction is a 2'-deoxyribonucleoside 5'-triphosphate + H2O = a 2'-deoxyribonucleoside 5'-phosphate + diphosphate + H(+). Functionally, nucleoside triphosphate pyrophosphatase. May have a dual role in cell division arrest and in preventing the incorporation of modified nucleotides into cellular nucleic acids. This Acinetobacter baylyi (strain ATCC 33305 / BD413 / ADP1) protein is Nucleoside triphosphate pyrophosphatase.